The chain runs to 484 residues: ATP-dependent RNA helicase DDX25 (484 aa).

Thr49 carries the phosphothreonine modification. The short motif at 62–75 is the Nuclear export signal element; the sequence is LAANSLLNKLIRQS. Residues 98–126 carry the Q motif motif; it reads KTFEELRLKEELLKGIYAMGFNRPSKIQE. The short motif at 101–115 is the Nuclear localization signal element; it reads EELRLKEELLKGIYA. The Helicase ATP-binding domain occupies 131–301; that stretch reads MMLAHPPQNL…ERIIPDPNVI (171 aa). 144–151 contributes to the ATP binding site; sequence SQSGTGKT. Residues 248–251 carry the DEAD box motif; the sequence is DEAD. Residues 312–479 form the Helicase C-terminal domain; it reads NIRQYYVLCE…QLDPEDMDEI (168 aa).

The protein belongs to the DEAD box helicase family. Phosphorylated on threonine residues. The phosphorylated form is found in the cytoplasm but not in the nucleus. As to expression, isoform 1 is expressed in germ cells. Isoform 2 is expressed in Leydig cells and in round spermatids of adult testis upon gonadotropin stimulation.

The protein localises to the cytoplasm. It localises to the nucleus. It catalyses the reaction ATP + H2O = ADP + phosphate + H(+). In terms of biological role, ATP-dependent RNA helicase. Required for mRNA export and translation regulation during spermatid development. In Mus musculus (Mouse), this protein is ATP-dependent RNA helicase DDX25 (Ddx25).